Reading from the N-terminus, the 348-residue chain is Hereditary hemochromatosis protein homolog (348 aa).

Residues 1–22 (MGPRARPALFFLILLRTVAAQG) form the signal peptide. The segment at 23-114 (RPPRSHSLRY…IMDNHNHSKE (92 aa)) is alpha-1. Residues 23–306 (RPPRSHSLRY…WEPSLSNTLV (284 aa)) are Extracellular-facing. N-linked (GlcNAc...) asparagine glycans are attached at residues Asn-110, Asn-130, and Asn-234. The alpha-2 stretch occupies residues 115-205 (SHTLQVILGC…ELGRGVLDQQ (91 aa)). 2 disulfides stabilise this stretch: Cys-124–Cys-187 and Cys-225–Cys-282. An alpha-3 region spans residues 206–297 (VPPLVKVTHH…GLDQPLTATW (92 aa)). In terms of domain architecture, Ig-like C1-type spans 207–296 (PPLVKVTHHV…PGLDQPLTAT (90 aa)). A connecting peptide region spans residues 298-306 (EPSLSNTLV). A helical membrane pass occupies residues 307-330 (TGVISGIAVCVIIFFIGILFRILR). The Cytoplasmic portion of the chain corresponds to 331–348 (KRQASRGAMGDYVLGECE).

It belongs to the MHC class I family. As to quaternary structure, binds TFR through the extracellular domain in a pH-dependent manner.

It is found in the cell membrane. Functionally, binds to transferrin receptor (TFR) and reduces its affinity for iron-loaded transferrin. This chain is Hereditary hemochromatosis protein homolog (HFE), found in Ceratotherium simum (White rhinoceros).